The following is a 255-amino-acid chain: Hydroxyacylglutathione hydrolase (255 aa).

Residues His53, His55, Asp57, His58, His110, Asp127, and His165 each coordinate Zn(2+).

Belongs to the metallo-beta-lactamase superfamily. Glyoxalase II family. As to quaternary structure, monomer. Requires Zn(2+) as cofactor.

It catalyses the reaction an S-(2-hydroxyacyl)glutathione + H2O = a 2-hydroxy carboxylate + glutathione + H(+). It functions in the pathway secondary metabolite metabolism; methylglyoxal degradation; (R)-lactate from methylglyoxal: step 2/2. In terms of biological role, thiolesterase that catalyzes the hydrolysis of S-D-lactoyl-glutathione to form glutathione and D-lactic acid. This Xanthomonas campestris pv. campestris (strain 8004) protein is Hydroxyacylglutathione hydrolase.